Reading from the N-terminus, the 122-residue chain is Large ribosomal subunit protein uL14 (122 aa).

This sequence belongs to the universal ribosomal protein uL14 family. As to quaternary structure, part of the 50S ribosomal subunit. Forms a cluster with proteins L3 and L19. In the 70S ribosome, L14 and L19 interact and together make contacts with the 16S rRNA in bridges B5 and B8.

In terms of biological role, binds to 23S rRNA. Forms part of two intersubunit bridges in the 70S ribosome. The polypeptide is Large ribosomal subunit protein uL14 (Streptococcus equi subsp. equi (strain 4047)).